Here is a 319-residue protein sequence, read N- to C-terminus: UPF0761 membrane protein PBPRA3489 (319 aa).

6 consecutive transmembrane segments (helical) span residues 50 to 70 (LVPM…FAGL), 107 to 127 (VGIG…DHAL), 143 to 163 (FSIY…SIAV), 188 to 208 (ALPV…VPNL), 215 to 235 (ALLG…GFAL), and 249 to 269 (ALAV…IVLL).

The protein belongs to the UPF0761 family.

Its subcellular location is the cell inner membrane. The sequence is that of UPF0761 membrane protein PBPRA3489 from Photobacterium profundum (strain SS9).